The primary structure comprises 443 residues: Nitrate/nitrite binding protein NrtA (443 aa).

Positions 1–25 (MSQFSRRKFLLTAGGTAAAALWLNA) are cleaved as a signal peptide. Residue cysteine 26 is the site of N-palmitoyl cysteine attachment. A lipid anchor (S-diacylglycerol cysteine) is attached at cysteine 26. Residues 31 to 46 (SSTDTTGSTSTPAPSG) are compositionally biased toward low complexity. Residues 31–52 (SSTDTTGSTSTPAPSGTSGGDA) are disordered. The nitrate site is built by tryptophan 96, glutamine 150, histidine 195, glycine 239, and lysine 268.

This sequence belongs to the CmpA/NrtA family. As to quaternary structure, the complex is composed of two ATP-binding proteins (NrtC and NrtD), two transmembrane proteins (NrtB) and a solute-binding protein (NrtA). NrtA can form homotrimers. Post-translationally, the N-terminus is blocked.

It is found in the cell inner membrane. Its function is as follows. Part of the ABC transporter complex NrtABCD involved in nitrate uptake. The complex is probably also involved in nitrite transport. NrtA is the substrate-binding protein. Binds both nitrate and nitrite with high affinity. This is Nitrate/nitrite binding protein NrtA from Synechococcus elongatus (strain ATCC 33912 / PCC 7942 / FACHB-805) (Anacystis nidulans R2).